A 271-amino-acid chain; its full sequence is 4-hydroxy-tetrahydrodipicolinate reductase (271 aa).

NAD(+)-binding positions include 10–15 (GAGGRM), E36, 100–102 (GTT), and 124–127 (SGNM). The Proton donor/acceptor role is filled by H157. H158 provides a ligand contact to (S)-2,3,4,5-tetrahydrodipicolinate. The Proton donor role is filled by K161. 167-168 (GT) is a (S)-2,3,4,5-tetrahydrodipicolinate binding site.

It belongs to the DapB family.

It is found in the cytoplasm. It carries out the reaction (S)-2,3,4,5-tetrahydrodipicolinate + NAD(+) + H2O = (2S,4S)-4-hydroxy-2,3,4,5-tetrahydrodipicolinate + NADH + H(+). The catalysed reaction is (S)-2,3,4,5-tetrahydrodipicolinate + NADP(+) + H2O = (2S,4S)-4-hydroxy-2,3,4,5-tetrahydrodipicolinate + NADPH + H(+). The protein operates within amino-acid biosynthesis; L-lysine biosynthesis via DAP pathway; (S)-tetrahydrodipicolinate from L-aspartate: step 4/4. In terms of biological role, catalyzes the conversion of 4-hydroxy-tetrahydrodipicolinate (HTPA) to tetrahydrodipicolinate. This chain is 4-hydroxy-tetrahydrodipicolinate reductase, found in Rhodopseudomonas palustris (strain BisB18).